Here is a 253-residue protein sequence, read N- to C-terminus: Transcription factor bHLH106 (253 aa).

The 50-residue stretch at 66-115 (AALRNHKEAERRRRERINSHLNKLRNVLSCNSKTDKATLLAKVVQRVREL) folds into the bHLH domain.

As to quaternary structure, homodimer.

Its subcellular location is the nucleus. The sequence is that of Transcription factor bHLH106 (BHLH106) from Arabidopsis thaliana (Mouse-ear cress).